Reading from the N-terminus, the 230-residue chain is Demethylmenaquinone methyltransferase (230 aa).

S-adenosyl-L-methionine contacts are provided by residues T57, D77, 101–102 (DI), and S118.

It belongs to the class I-like SAM-binding methyltransferase superfamily. MenG/UbiE family.

The catalysed reaction is a 2-demethylmenaquinol + S-adenosyl-L-methionine = a menaquinol + S-adenosyl-L-homocysteine + H(+). Its pathway is quinol/quinone metabolism; menaquinone biosynthesis; menaquinol from 1,4-dihydroxy-2-naphthoate: step 2/2. Functionally, methyltransferase required for the conversion of demethylmenaquinol (DMKH2) to menaquinol (MKH2). The protein is Demethylmenaquinone methyltransferase of Chlamydia felis (strain Fe/C-56) (Chlamydophila felis).